The chain runs to 832 residues: Sodium/hydrogen exchanger 3 (832 aa).

The signal sequence occupies residues 1–29 (MSGRGGCGPCWGLLLALVLALGALPWTQG). Over 30 to 50 (AEQEHHDEIQGFQIVTFKWHH) the chain is Extracellular. The chain crosses the membrane as a helical span at residues 51 to 73 (VQDPYIIALWVLVASLAKIVFHL). The Cytoplasmic portion of the chain corresponds to 74 to 81 (SHKVTSVV). Residues 82–101 (PESALLIVLGLVLGGIVLAA) traverse the membrane as a helical segment. Residues 102 to 110 (DHIASFTLT) lie on the Extracellular side of the membrane. A helical transmembrane segment spans residues 111-128 (PTVFFFYLLPPIVLDAGY). Residues 129 to 131 (FMP) lie on the Cytoplasmic side of the membrane. The chain crosses the membrane as a helical span at residues 132–167 (NRLFFSNLGSILLYAVVGTVWNAATTGLSLYGVFLS). A 1,2-diacyl-sn-glycero-3-phospho-(1D-myo-inositol) contacts are provided by glycine 140 and serine 141. Over 168 to 180 (GIMGELKIGLLDF) the chain is Extracellular. Residues 181 to 202 (LLFGSLIAAVDPVAVLAVFEEV) traverse the membrane as a helical segment. Over 203–204 (HV) the chain is Cytoplasmic. The chain crosses the membrane as a helical span at residues 205–236 (NEVLFIIVFGESLLNDAVTVVLYNVFQSFVTL). The Extracellular portion of the chain corresponds to 237-243 (GGDKVTG). Residues 244-278 (VDCVKGIVSFFVVSLGGTLVGVVFAFLLSLVTRFT) traverse the membrane as a helical segment. Residues 279–280 (KH) lie on the Cytoplasmic side of the membrane. Residues 281–303 (VRVIEPGFVFIISYLSYLTSEML) form a helical membrane-spanning segment. Residues 304–305 (SL) are Extracellular-facing. A helical membrane pass occupies residues 306–322 (SSILAITFCGICCQKYV). The Cytoplasmic portion of the chain corresponds to 323–329 (KANISEQ). Residues 330-358 (SATTVRYTMKMLASGAETIIFMFLGISAV) traverse the membrane as a helical segment. Residues 359 to 366 (DPLIWTWN) are Extracellular-facing. A helical transmembrane segment spans residues 367 to 388 (TAFVLLTLLFVSVFRAIGVVLQ). The Cytoplasmic portion of the chain corresponds to 389-401 (TWLLNRYRMVQLE). Methionine 397 is an a 1,2-diacyl-sn-glycero-3-phospho-(1D-myo-inositol) binding site. The chain crosses the membrane as a helical span at residues 402–425 (LIDQVVMSYGGLRGAVAFALVALL). Residues 426-432 (DGNKVKE) lie on the Extracellular side of the membrane. Residues 433 to 466 (KNLFVSTTIIVVFFTVIFQGLTIKPLVQWLKVKR) form a helical membrane-spanning segment. At 467–832 (SEHREPKLNE…GAEHPESTHM (366 aa)) the chain is on the cytoplasmic side. Residues glutamine 496, isoleucine 497, and histidine 499 each coordinate a 1,2-diacyl-sn-glycero-3-phospho-(1D-myo-inositol). Serine 554 and serine 562 each carry phosphoserine. The tract at residues 575-589 (RPSTVEASVSYLLRE) is interaction with EZR. Residues 590–667 (SASAVCLDMQ…RKRLESFKSA (78 aa)) are interaction with NHERF4. The segment at 591–696 (ASAVCLDMQS…AQKRRNSSVP (106 aa)) is interaction with AHCYL1. Phosphoserine occurs at positions 592 and 607. Phosphoserine; by SGK1 is present on serine 663. Positions 664-706 (FKSAKLGLGQSKKATKHKRERERAQKRRNSSVPNGKLPLDSPA) are disordered. Residues 676–692 (KATKHKRERERAQKRRN) show a composition bias toward basic residues. Phosphoserine occurs at positions 719, 813, and 816.

It belongs to the monovalent cation:proton antiporter 1 (CPA1) transporter (TC 2.A.36) family. Homodimer. Found in the forms of complex and dynamic macromolecular complexes. Interacts with CHP1; this interaction increases trafficking and activity at the plasma membrane of SLC9A3. Interacts with CHP2 and SHANK2. Interacts with NHERF4 and interaction decreases in response to elevated calcium ion levels. Binds NHERF1 and NHERF2. Interacts with PDZK1 (via C-terminal PDZ domain). Interacts with AHCYL1; interaction is required for SLC9A3 activity. Interacts with EZR; interaction targets SLC9A3 to the apical membrane. Interacts with SNX27 (via PDZ domains); directs SLC9A3 membrane insertion from early endosomes to the plasma membrane. Post-translationally, phosphorylated by PKA, which inhibits activity. Phosphorylation at Ser-663 by SGK1 is associated with increased abundance at the cell membrane and activity. Phosphorylation at Ser-719 by CSNK2A1 regulates SLC9A3 activity through the formation of multiple signaling complexes. As to expression, intestinal and kidney specific. Most abundant in kidney cortex, followed equally by ileum and ascending colon, then kidney medulla and jejunum. Is absent from duodenum and descending colon.

It is found in the apical cell membrane. The protein localises to the cell membrane. Its subcellular location is the recycling endosome membrane. The protein resides in the early endosome membrane. The catalysed reaction is Na(+)(in) + H(+)(out) = Na(+)(out) + H(+)(in). Its activity is regulated as follows. Seems to switch between active and inactive modes in response to various stimuli. Activated directly or indirectly by membrane phosphatidylinositol (PIs). Regulated by a variety of auxiliary proteins, which facilitate the maturation, cell surface expression and function of the transporter. Inhibited specifically by the drug tenapanor. Plasma membrane Na(+)/H(+) antiporter. Exchanges intracellular H(+) ions for extracellular Na(+) in 1:1 stoichiometry, playing a key role in salt and fluid absorption and pH homeostasis. Major apical Na(+)/H(+) exchanger in kidney and intestine playing an important role in renal and intestine Na(+) absorption and blood pressure regulation. This is Sodium/hydrogen exchanger 3 (SLC9A3) from Oryctolagus cuniculus (Rabbit).